The sequence spans 180 residues: Stathmin-3 (180 aa).

2 S-palmitoyl cysteine lipidation sites follow: Cys-22 and Cys-24. In terms of domain architecture, SLD spans 38-180 (GDMEVKQLDK…NKEQREEMSG (143 aa)). Phosphoserine occurs at positions 50, 60, 65, 68, 72, 73, and 81. The segment at 58–82 (LKSPSDLSPESPMLSSPPKRKDTSL) is disordered. Low complexity predominate over residues 60 to 74 (SPSDLSPESPMLSSP). A coiled-coil region spans residues 76–179 (KRKDTSLEEL…RNKEQREEMS (104 aa)).

This sequence belongs to the stathmin family. In terms of assembly, interacts with STAT3. Interacts with CLU (secreted form); this interaction may act as an important modulator during neuronal differentiation. Post-translationally, N-terminal palmitoylation promotes specific anchoring to the cytosolic leaflet of Golgi membranes and subsequent vesicular trafficking along dendrites and axons. Neuronal Stathmins are substrates for palmitoyltransferases ZDHHC3, ZDHHC7 and ZDHHC15.

Its subcellular location is the golgi apparatus. It localises to the cell projection. It is found in the growth cone. The protein resides in the axon. The protein localises to the cytoplasm. Its subcellular location is the cytosol. In terms of biological role, exhibits microtubule-destabilizing activity, which is antagonized by STAT3. This Bos taurus (Bovine) protein is Stathmin-3 (STMN3).